Consider the following 647-residue polypeptide: Carboxypeptidase Z (647 aa).

A signal peptide spans M1–P18. Positions A35–P157 constitute an FZ domain. 5 disulfides stabilise this stretch: C40–C106, C48–C99, C90–C126, C115–C154, and C119–C143. Positions K183–V499 constitute a Peptidase M14 domain. The Zn(2+) site is built by H245 and E248. N278 carries an N-linked (GlcNAc...) asparagine glycan. H377 contributes to the Zn(2+) binding site. Catalysis depends on E469, which acts as the Proton donor/acceptor.

The protein belongs to the peptidase M14 family. Interacts with WNT4 vie its FZ domain. Requires Zn(2+) as cofactor. As to expression, in the early embryo it is initially expressed throughout the somites and subsequently becomes restricted to the sclerotome. Expressed in somites, paraxial head mesoderm and apical ectodermal ridge.

It localises to the secreted. It is found in the extracellular space. The protein resides in the extracellular matrix. Inhibited by 2-mercaptomethyl-3-guanidinoethylthiopropanoic acid (MGTA) and guanidinoethylmercaptosuccinic acid (GEMSA). Inhibited by chelating agents such as EDTA and EGTA. In terms of biological role, cleaves substrates with C-terminal arginine residues. Modulates the Wnt signaling pathway, probably by cleaving some undefined protein. Regulates the development of skeletal elements during development, probably by activating WNT4. In Gallus gallus (Chicken), this protein is Carboxypeptidase Z (CPZ).